A 617-amino-acid chain; its full sequence is Protelomerase (617 aa).

The DNA site is built by Arg270, Lys295, Arg376, and His409. Tyr418 serves as the catalytic Nucleophile. Acidic residues predominate over residues 535 to 562 (DAEEDEIEEDFTDEEIDDTEFDVSDNAS). The tract at residues 535 to 575 (DAEEDEIEEDFTDEEIDDTEFDVSDNASDEDKPEDKPRFAA) is disordered. Positions 563–575 (DEDKPEDKPRFAA) are enriched in basic and acidic residues.

This sequence belongs to the Caudoviricetes Protelomerase family. In terms of assembly, monomer. Homodimer; in presence of DNA.

In terms of biological role, converts the circular intermediates produced by the viral replication and carrying a joined telomere site to a linear DNA molecule with covalently closed hairpin ends. The viral circular DNA is cleaved at a palindromic site called telRL thereby generating a linear prophage plasmid with telomeres. Binds covalently to the 3'-phosphoryl of the cleaved strands. This Yersinia enterocolitica (Bacteriophage PY54) protein is Protelomerase (tel).